Here is a 127-residue protein sequence, read N- to C-terminus: Putative platinum sensitivity protein 1 (127 aa).

The polypeptide is Putative platinum sensitivity protein 1 (PSY1) (Saccharomyces cerevisiae (strain ATCC 204508 / S288c) (Baker's yeast)).